The sequence spans 69 residues: MSQPMTVQCPTCDAPVEWSAASPSRPFCSERCKLIDLGAWASEEHAIPVSPDAEDELFSGDLEAPHRGH.

Cysteine 9, cysteine 12, cysteine 28, and cysteine 32 together coordinate Zn(2+). A disordered region spans residues 48 to 69 (PVSPDAEDELFSGDLEAPHRGH).

This sequence belongs to the DNA gyrase inhibitor YacG family. Interacts with GyrB. It depends on Zn(2+) as a cofactor.

Inhibits all the catalytic activities of DNA gyrase by preventing its interaction with DNA. Acts by binding directly to the C-terminal domain of GyrB, which probably disrupts DNA binding by the gyrase. In Pseudomonas syringae pv. syringae (strain B728a), this protein is DNA gyrase inhibitor YacG.